A 510-amino-acid polypeptide reads, in one-letter code: ATP synthase subunit alpha (510 aa).

170 to 177 is a binding site for ATP; the sequence is GDRQTGKT.

It belongs to the ATPase alpha/beta chains family. In terms of assembly, F-type ATPases have 2 components, CF(1) - the catalytic core - and CF(0) - the membrane proton channel. CF(1) has five subunits: alpha(3), beta(3), gamma(1), delta(1), epsilon(1). CF(0) has three main subunits: a(1), b(2) and c(9-12). The alpha and beta chains form an alternating ring which encloses part of the gamma chain. CF(1) is attached to CF(0) by a central stalk formed by the gamma and epsilon chains, while a peripheral stalk is formed by the delta and b chains.

The protein localises to the cell inner membrane. The catalysed reaction is ATP + H2O + 4 H(+)(in) = ADP + phosphate + 5 H(+)(out). Its function is as follows. Produces ATP from ADP in the presence of a proton gradient across the membrane. The alpha chain is a regulatory subunit. The chain is ATP synthase subunit alpha from Caulobacter vibrioides (strain ATCC 19089 / CIP 103742 / CB 15) (Caulobacter crescentus).